Here is a 989-residue protein sequence, read N- to C-terminus: Vacuolar membrane protease (989 aa).

The disordered stretch occupies residues 1-25 (MDRQSLRTTLRAMDASNENGSAKGA). The Cytoplasmic segment spans residues 1-41 (MDRQSLRTTLRAMDASNENGSAKGAKKTTIGSFVRWTFGFN). Residues 42–62 (SVPLTTLVTITTVLLGLLVYV) traverse the membrane as a helical segment. The Vacuolar segment spans residues 63-383 (STSVNPPDVT…YLFIILPLQY (321 aa)). Residues H181 and D193 each coordinate Zn(2+). E227 serves as the catalytic Proton acceptor. A Zn(2+)-binding site is contributed by E228. An N-linked (GlcNAc...) asparagine glycan is attached at N245. 2 residues coordinate Zn(2+): E253 and H325. A helical membrane pass occupies residues 384-404 (IFVISCLTLAVGPIFVGFLFL). Residues 405–426 (LVLRKQINAGTSETILGGWLRS) are Cytoplasmic-facing. The chain crosses the membrane as a helical span at residues 427–447 (IVSVLVSVVATYFVVETLHLG). Residues 448–460 (NELYVVRSFYTPL) lie on the Vacuolar side of the membrane. Residues 461-481 (FAGLGTFIFVNYVLLGFFHFV) form a helical membrane-spanning segment. Residues 482-488 (RPVCDQK) lie on the Cytoplasmic side of the membrane. A helical transmembrane segment spans residues 489–509 (LIILLELSVVLWVLLLLSVIH). Over 510–520 (EATHKATGEYH) the chain is Vacuolar. A helical transmembrane segment spans residues 521 to 541 (FLILYIVVATASILGLFGHLV). Over 542–611 (TSTETSTFVE…IAVSMGYDWS (70 aa)) the chain is Cytoplasmic. The disordered stretch occupies residues 548–576 (TFVEGPEDEEDTVDASEATETSPLLPEAS). The segment covering 552–561 (GPEDEEDTVD) has biased composition (acidic residues). The chain crosses the membrane as a helical span at residues 612 to 632 (IQFLLVVPITFFVTFGLAASL). The Vacuolar segment spans residues 633–648 (LDGLHQTPLESEKSAD). A helical membrane pass occupies residues 649–669 (FVYTTITAMSVLVGITFLPFV). Topologically, residues 670–673 (HKLQ) are cytoplasmic. A helical transmembrane segment spans residues 674-694 (VFVPIVVVGVAVTASFVHILS). Residues 695-989 (PPFSSNAPAK…LVEVSKYVEL (295 aa)) are Vacuolar-facing. 3 N-linked (GlcNAc...) asparagine glycosylation sites follow: N745, N793, and N822.

The protein belongs to the peptidase M28 family. Requires Zn(2+) as cofactor.

It is found in the vacuole membrane. In terms of biological role, may be involved in vacuolar sorting and osmoregulation. The polypeptide is Vacuolar membrane protease (Yarrowia lipolytica (strain CLIB 122 / E 150) (Yeast)).